The sequence spans 820 residues: 1,4-alpha-glucan-branching enzyme, chloroplastic/amyloplastic (820 aa).

The segment covering 1–20 (MLCLTSSSSSAPAPLLPSLA) has biased composition (low complexity). The interval 1–28 (MLCLTSSSSSAPAPLLPSLADRPSPGIA) is disordered. The transit peptide at 1–64 (MLCLTSSSSS…SVPATARKNK (64 aa)) directs the protein to the chloroplast. Residues Trp-153 and Lys-188 each contribute to the (1,4-alpha-D-glucosyl)n site. Asp-409 serves as the catalytic Nucleophile. Catalysis depends on Glu-464, which acts as the Proton donor.

It belongs to the glycosyl hydrolase 13 family. GlgB subfamily. As to quaternary structure, monomer.

It localises to the plastid. It is found in the chloroplast. The protein localises to the amyloplast. The catalysed reaction is Transfers a segment of a (1-&gt;4)-alpha-D-glucan chain to a primary hydroxy group in a similar glucan chain.. It functions in the pathway glycan biosynthesis; starch biosynthesis. Catalyzes the formation of the alpha-1,6-glucosidic linkages in starch by scission of a 1,4-alpha-linked oligosaccharide from growing alpha-1,4-glucan chains and the subsequent attachment of the oligosaccharide to the alpha-1,6 position. This Oryza sativa subsp. japonica (Rice) protein is 1,4-alpha-glucan-branching enzyme, chloroplastic/amyloplastic (SBE1).